We begin with the raw amino-acid sequence, 59 residues long: Large ribosomal subunit protein bL32 (59 aa).

The disordered stretch occupies residues Met1–Ser24.

This sequence belongs to the bacterial ribosomal protein bL32 family.

In Ralstonia nicotianae (strain ATCC BAA-1114 / GMI1000) (Ralstonia solanacearum), this protein is Large ribosomal subunit protein bL32.